The following is a 1234-amino-acid chain: DNA-directed RNA polymerase subunit beta (1234 aa).

Positions 1189 to 1212 (VLSSQDNDYEEPEENDEEDELNLD) are disordered. Residues 1195 to 1212 (NDYEEPEENDEEDELNLD) show a composition bias toward acidic residues.

Belongs to the RNA polymerase beta chain family. In terms of assembly, the RNAP catalytic core consists of 2 alpha, 1 beta, 1 beta' and 1 omega subunit. When a sigma factor is associated with the core the holoenzyme is formed, which can initiate transcription.

It catalyses the reaction RNA(n) + a ribonucleoside 5'-triphosphate = RNA(n+1) + diphosphate. Its function is as follows. DNA-dependent RNA polymerase catalyzes the transcription of DNA into RNA using the four ribonucleoside triphosphates as substrates. The chain is DNA-directed RNA polymerase subunit beta from Clostridium kluyveri (strain NBRC 12016).